A 375-amino-acid polypeptide reads, in one-letter code: Enoyl-[acyl-carrier-protein] reductase, mitochondrial (375 aa).

Residues 1–37 (MAALMESVVGRALKFSSTANFRSIRRGETPTLCIKSF) constitute a mitochondrion transit peptide. Residue tyrosine 96 is the Proton donor of the active site. NADP(+) contacts are provided by residues asparagine 169, 195 to 198 (TSIV), 218 to 220 (RDR), 287 to 290 (YGGM), 312 to 314 (FWL), and lysine 370.

It belongs to the zinc-containing alcohol dehydrogenase family. Quinone oxidoreductase subfamily. As to quaternary structure, homodimer.

It is found in the mitochondrion. It catalyses the reaction a 2,3-saturated acyl-[ACP] + NADP(+) = a (2E)-enoyl-[ACP] + NADPH + H(+). Its function is as follows. Catalyzes the NADPH-dependent reduction of trans-2-enoyl thioesters in mitochondrial fatty acid synthesis (fatty acid synthesis type II). Fatty acid chain elongation in mitochondria uses acyl carrier protein (ACP) as an acyl group carrier, but the enzyme accepts both ACP and CoA thioesters as substrates in vitro. The chain is Enoyl-[acyl-carrier-protein] reductase, mitochondrial from Arabidopsis thaliana (Mouse-ear cress).